The sequence spans 820 residues: Cell division control protein 48 homolog C (820 aa).

Disordered stretches follow at residues 72–157 (RVKD…RFDL) and 169–188 (LNSSSKKPIGSPAEKNVEVE). Positions 76–87 (EDEDDNIGDEEG) are enriched in acidic residues. The stretch at 85–122 (EEGSASQRKKQRRVDEKEEKLQRAEQSHLRKRNMERSV) forms a coiled coil. The span at 97 to 119 (RVDEKEEKLQRAEQSHLRKRNME) shows a compositional bias: basic and acidic residues. The segment covering 121 to 142 (SVSSSPSSSSSSEDSGDVSTSE) has biased composition (low complexity). ATP-binding positions include 274–281 (GPPGCGKT) and 569–576 (GPPGCGKT).

Belongs to the AAA ATPase family.

The protein localises to the nucleus. Its subcellular location is the cytoplasm. The protein resides in the cytoskeleton. It is found in the phragmoplast. Probably functions in cell division and growth processes. Interacts with certain SNAREs as part of specialized membrane fusion events where vesicles from the same organelle fuse (homotypic fusion). The protein is Cell division control protein 48 homolog C (CDC48C) of Arabidopsis thaliana (Mouse-ear cress).